The following is a 349-amino-acid chain: Probable dual-specificity RNA methyltransferase RlmN (349 aa).

The active-site Proton acceptor is the Glu-93. The 231-residue stretch at 99–329 (YKHGNTICVS…TTIRREMGSD (231 aa)) folds into the Radical SAM core domain. An intrachain disulfide couples Cys-106 to Cys-334. Positions 113, 117, and 120 each coordinate [4Fe-4S] cluster. S-adenosyl-L-methionine is bound by residues 160 to 161 (GE), Ser-192, 215 to 217 (SLH), and Asn-291. Cys-334 serves as the catalytic S-methylcysteine intermediate.

The protein belongs to the radical SAM superfamily. RlmN family. [4Fe-4S] cluster serves as cofactor.

The protein localises to the cytoplasm. The enzyme catalyses adenosine(2503) in 23S rRNA + 2 reduced [2Fe-2S]-[ferredoxin] + 2 S-adenosyl-L-methionine = 2-methyladenosine(2503) in 23S rRNA + 5'-deoxyadenosine + L-methionine + 2 oxidized [2Fe-2S]-[ferredoxin] + S-adenosyl-L-homocysteine. It carries out the reaction adenosine(37) in tRNA + 2 reduced [2Fe-2S]-[ferredoxin] + 2 S-adenosyl-L-methionine = 2-methyladenosine(37) in tRNA + 5'-deoxyadenosine + L-methionine + 2 oxidized [2Fe-2S]-[ferredoxin] + S-adenosyl-L-homocysteine. Functionally, specifically methylates position 2 of adenine 2503 in 23S rRNA and position 2 of adenine 37 in tRNAs. This Clostridium tetani (strain Massachusetts / E88) protein is Probable dual-specificity RNA methyltransferase RlmN.